The primary structure comprises 351 residues: Magnesium-protoporphyrin IX monomethyl ester [oxidative] cyclase 1 (351 aa).

The protein belongs to the AcsF family. Fe cation is required as a cofactor.

The enzyme catalyses Mg-protoporphyrin IX 13-monomethyl ester + 3 NADPH + 3 O2 + 2 H(+) = 3,8-divinyl protochlorophyllide a + 3 NADP(+) + 5 H2O. It participates in porphyrin-containing compound metabolism; chlorophyll biosynthesis (light-independent). Functionally, catalyzes the formation of the isocyclic ring in chlorophyll biosynthesis. Mediates the cyclase reaction, which results in the formation of divinylprotochlorophyllide (Pchlide) characteristic of all chlorophylls from magnesium-protoporphyrin IX 13-monomethyl ester (MgPMME). The sequence is that of Magnesium-protoporphyrin IX monomethyl ester [oxidative] cyclase 1 from Nostoc sp. (strain PCC 7120 / SAG 25.82 / UTEX 2576).